The following is a 258-amino-acid chain: Regulatory protein RecX (258 aa).

It belongs to the RecX family.

The protein localises to the cytoplasm. Functionally, modulates RecA activity. The protein is Regulatory protein RecX of Streptococcus mutans serotype c (strain ATCC 700610 / UA159).